The chain runs to 405 residues: Putative polysaccharide ligase RP358 (405 aa).

Helical transmembrane passes span 23 to 43 (IAATVAFFLLSIIITGFISFI), 77 to 97 (LFTAWCFISCLFAVHPINSLV), 120 to 140 (VLYIKNSLILGIITAILLFFI), 156 to 178 (FGLYMLDRGCALLSITTWVAIII), 201 to 221 (ISDSLASFLGFSIGGIIFILA), 227 to 247 (IFFKLITISLITGSLLFPVIA), 270 to 290 (LFIWHFVANKIIIRPILGYGF), 322 to 342 (ILQITLELGILGLALFLCLVY), 353 to 375 (VSNFRAASYSCFINYYIIGMISY), and 377 to 397 (IWQTWWILSGIWILVLMKLLV).

Belongs to the O-antigen ligase family.

Its subcellular location is the membrane. This chain is Putative polysaccharide ligase RP358, found in Rickettsia prowazekii (strain Madrid E).